Reading from the N-terminus, the 2025-residue chain is E3 ubiquitin-protein ligase TTC3 (2025 aa).

The interval 1-230 (MDNFAEGDFT…TQSCMDCIEE (230 aa)) is interaction with POLG. TPR repeat units follow at residues 231–264 (GELM…RPEN) and 266–298 (LLYG…KNTW). S378 carries the phosphoserine; by PKB/AKT2 modification. The interval 423-458 (DCHPEFSPPSSQPPKHKGKQKSRNNESEKFSSSSPL) is disordered. 2 TPR repeats span residues 536-572 (VLVV…YPSE) and 576-609 (CLAY…IYRL). The segment at 786–805 (ERMEEDLRESNPPKNEEQKE) is disordered. The segment covering 793 to 805 (RESNPPKNEEQKE) has biased composition (basic and acidic residues). S1009 carries the post-translational modification Phosphoserine. Disordered regions lie at residues 1012-1068 (APFS…GPFA), 1215-1295 (KPDV…SCNS), 1773-1842 (DPSV…SPKK), and 1894-1944 (ILDE…QKAE). The segment covering 1019 to 1029 (VKNKSKKKKPK) has biased composition (basic residues). Residues 1038–1052 (SGTTSVTSNNEIITS) are compositionally biased toward polar residues. A Phosphoserine modification is found at S1061. Basic and acidic residues predominate over residues 1894–1912 (ILDEQKKKKPNPGKDKRTY). Positions 1913-1928 (EPSSATPVTRSSQGSP) are enriched in polar residues. The segment at 1957-1997 (CEICHEVFKSKNVRVLKCGHKYHKGCFKQWLKGQSACPACQ) adopts an RING-type zinc-finger fold. The interval 2004-2025 (EESPSGRGWPSQNQELPSCSSR) is disordered. Over residues 2013–2025 (PSQNQELPSCSSR) the composition is skewed to polar residues.

Interacts (when phosphorylated on Ser-378) with AKT1, AKT2 and AKT3 (when phosphorylated). Interacts with CIT. Interacts with POLG. Interacts with HSP70. Interacts with SMURF2. Phosphorylation on Ser-378 by Akt is required for ubiquitin ligase activity. In terms of processing, proteolytically cleaved into differently sized N- and C-terminal fragments. Found in all tissues examined.

The protein resides in the nucleus. The protein localises to the cytoplasm. It localises to the golgi apparatus. The catalysed reaction is S-ubiquitinyl-[E2 ubiquitin-conjugating enzyme]-L-cysteine + [acceptor protein]-L-lysine = [E2 ubiquitin-conjugating enzyme]-L-cysteine + N(6)-ubiquitinyl-[acceptor protein]-L-lysine.. The protein operates within protein modification; protein ubiquitination. Functionally, E3 ubiquitin-protein ligase which catalyzes the formation of 'Lys-48'-polyubiquitin chains. Mediates the ubiquitination and subsequent degradation of phosphorylated Akt (AKT1, AKT2 and AKT3) in the nucleus. Acts as a terminal regulator of Akt signaling after activation; its phosphorylation by Akt, which is a prerequisite for ubiquitin ligase activity, suggests the existence of a regulation mechanism required to control Akt levels after activation. Positively regulates TGFB1-induced epithelial-mesenchymal transition and myofibroblast differentiation by mediating the ubiquitination and subsequent degradation of SMURF2. Regulates neuronal differentiation by regulating actin remodeling and Golgi organization via a signaling cascade involving RHOA, CIT and ROCK. Inhibits cell proliferation. The sequence is that of E3 ubiquitin-protein ligase TTC3 (TTC3) from Homo sapiens (Human).